Consider the following 112-residue polypeptide: Macrodomain Ori protein (112 aa).

The interval Phe-91–Asp-112 is disordered. Positions Gly-103–Asp-112 are enriched in acidic residues.

The protein belongs to the MaoP family.

Involved in the organization of the Ori region of the chromosome into a macrodomain (MD). It constrains DNA mobility in the Ori macrodomain and limits long-distance DNA interactions with other chromosomal regions. The chain is Macrodomain Ori protein from Escherichia coli O157:H7.